Reading from the N-terminus, the 309-residue chain is Large ribosomal subunit protein mL45 (309 aa).

Belongs to the mitochondrion-specific ribosomal protein mL45 family. As to quaternary structure, component of the mitochondrial ribosome large subunit (39S) which comprises a 16S rRNA and about 50 distinct proteins.

The protein localises to the mitochondrion. Component of the mitochondrial large ribosomal subunit (mt-LSU). Within the mitochondrial ribosomes, required to direct the nascent polypeptide toward the tunnel exit and position the exit at a distance from the membrane surface. In Xenopus laevis (African clawed frog), this protein is Large ribosomal subunit protein mL45 (mrpl45).